Consider the following 274-residue polypeptide: Dermonecrotic toxin LcsSicTox-betaIC1 (274 aa).

The active site involves H5. The Mg(2+) site is built by E25 and D27. H41 serves as the catalytic Nucleophile. 2 disulfide bridges follow: C45–C51 and C47–C190. The N-linked (GlcNAc...) asparagine glycan is linked to N66. D85 is a Mg(2+) binding site.

The protein belongs to the arthropod phospholipase D family. Class II subfamily. Mg(2+) serves as cofactor. As to expression, expressed by the venom gland.

It localises to the secreted. It carries out the reaction an N-(acyl)-sphingosylphosphocholine = an N-(acyl)-sphingosyl-1,3-cyclic phosphate + choline. It catalyses the reaction an N-(acyl)-sphingosylphosphoethanolamine = an N-(acyl)-sphingosyl-1,3-cyclic phosphate + ethanolamine. The catalysed reaction is a 1-acyl-sn-glycero-3-phosphocholine = a 1-acyl-sn-glycero-2,3-cyclic phosphate + choline. The enzyme catalyses a 1-acyl-sn-glycero-3-phosphoethanolamine = a 1-acyl-sn-glycero-2,3-cyclic phosphate + ethanolamine. Its function is as follows. Dermonecrotic toxins cleave the phosphodiester linkage between the phosphate and headgroup of certain phospholipids (sphingolipid and lysolipid substrates), forming an alcohol (often choline) and a cyclic phosphate. This toxin acts on sphingomyelin (SM). It may also act on ceramide phosphoethanolamine (CPE), lysophosphatidylcholine (LPC) and lysophosphatidylethanolamine (LPE), but not on lysophosphatidylserine (LPS), and lysophosphatidylglycerol (LPG). It acts by transphosphatidylation, releasing exclusively cyclic phosphate products as second products. Induces dermonecrosis, hemolysis, increased vascular permeability, edema, inflammatory response, and platelet aggregation. In Loxosceles cf. spinulosa (strain GJB-2008) (Recluse spider), this protein is Dermonecrotic toxin LcsSicTox-betaIC1.